Here is a 427-residue protein sequence, read N- to C-terminus: Transcription factor MYB98 (427 aa).

Residues 195-202 (TRKLSSSS) carry the Nuclear localization signal 1 motif. HTH myb-type domains are found at residues 212–267 (KSTL…RPDI) and 268–318 (KKET…RRQF). 2 DNA-binding regions (H-T-H motif) span residues 240-263 (WSHIAQVLPGRIGKQCRERWHNHL) and 291-314 (WAEIAKRLPGRTENSIKNHWNATK). Positions 361–368 (NKKKDVVV) match the Nuclear localization signal 2 motif.

In terms of tissue distribution, expressed at high levels in the synergid cells of the female gametophyte, and at lower levels in the endosperm of young seeds and the trichomes of young leaves and sepals.

It is found in the nucleus. Transcription factor that binds to the motif 5'-GTAACNT-3' in the promoter of target genes (e.g. DD11 and DD18) and promotes their expression within synergid cells (e.g. in the filiform apparatus) in ovules. Required for the formation of the filiform apparatus during synergid cell differentiation in the female gametophyte. Involved in pollen tube guidance to the micropyle. In Arabidopsis thaliana (Mouse-ear cress), this protein is Transcription factor MYB98.